The following is a 131-amino-acid chain: SPbeta prophage-derived uncharacterized protein YoqY (131 aa).

This Bacillus subtilis (strain 168) protein is SPbeta prophage-derived uncharacterized protein YoqY (yoqY).